An 89-amino-acid chain; its full sequence is Cell division topological specificity factor (89 aa).

The protein belongs to the MinE family.

Functionally, prevents the cell division inhibition by proteins MinC and MinD at internal division sites while permitting inhibition at polar sites. This ensures cell division at the proper site by restricting the formation of a division septum at the midpoint of the long axis of the cell. The polypeptide is Cell division topological specificity factor (Paracoccus denitrificans (strain Pd 1222)).